We begin with the raw amino-acid sequence, 142 residues long: Large ribosomal subunit protein uL13 (142 aa).

Belongs to the universal ribosomal protein uL13 family. Part of the 50S ribosomal subunit.

In terms of biological role, this protein is one of the early assembly proteins of the 50S ribosomal subunit, although it is not seen to bind rRNA by itself. It is important during the early stages of 50S assembly. The chain is Large ribosomal subunit protein uL13 from Francisella tularensis subsp. holarctica (strain FTNF002-00 / FTA).